A 301-amino-acid chain; its full sequence is Bifunctional protein FolD (301 aa).

NADP(+)-binding positions include Gly164–Ser166, Ser191, and Ile232.

The protein belongs to the tetrahydrofolate dehydrogenase/cyclohydrolase family. Homodimer.

The catalysed reaction is (6R)-5,10-methylene-5,6,7,8-tetrahydrofolate + NADP(+) = (6R)-5,10-methenyltetrahydrofolate + NADPH. The enzyme catalyses (6R)-5,10-methenyltetrahydrofolate + H2O = (6R)-10-formyltetrahydrofolate + H(+). Its pathway is one-carbon metabolism; tetrahydrofolate interconversion. Its function is as follows. Catalyzes the oxidation of 5,10-methylenetetrahydrofolate to 5,10-methenyltetrahydrofolate and then the hydrolysis of 5,10-methenyltetrahydrofolate to 10-formyltetrahydrofolate. The sequence is that of Bifunctional protein FolD from Borrelia garinii subsp. bavariensis (strain ATCC BAA-2496 / DSM 23469 / PBi) (Borreliella bavariensis).